We begin with the raw amino-acid sequence, 290 residues long: Ribosomal RNA small subunit methyltransferase A (290 aa).

S-adenosyl-L-methionine-binding residues include Asn-27, Leu-29, Gly-54, Glu-75, Asp-100, and Asn-125.

It belongs to the class I-like SAM-binding methyltransferase superfamily. rRNA adenine N(6)-methyltransferase family. RsmA subfamily.

Its subcellular location is the cytoplasm. It catalyses the reaction adenosine(1518)/adenosine(1519) in 16S rRNA + 4 S-adenosyl-L-methionine = N(6)-dimethyladenosine(1518)/N(6)-dimethyladenosine(1519) in 16S rRNA + 4 S-adenosyl-L-homocysteine + 4 H(+). Functionally, specifically dimethylates two adjacent adenosines (A1518 and A1519) in the loop of a conserved hairpin near the 3'-end of 16S rRNA in the 30S particle. May play a critical role in biogenesis of 30S subunits. This is Ribosomal RNA small subunit methyltransferase A from Streptococcus pneumoniae (strain ATCC 700669 / Spain 23F-1).